Reading from the N-terminus, the 566-residue chain is Arginine--tRNA ligase (566 aa).

The 'HIGH' region signature appears at 121–131; it reads ANPNGPFHIGH.

It belongs to the class-I aminoacyl-tRNA synthetase family.

It localises to the cytoplasm. It catalyses the reaction tRNA(Arg) + L-arginine + ATP = L-arginyl-tRNA(Arg) + AMP + diphosphate. In Methanococcus maripaludis (strain C6 / ATCC BAA-1332), this protein is Arginine--tRNA ligase.